The following is a 449-amino-acid chain: Methylenetetrahydrofolate--tRNA-(uracil-5-)-methyltransferase TrmFO (449 aa).

10–15 (GGGLAG) contributes to the FAD binding site.

This sequence belongs to the MnmG family. TrmFO subfamily. FAD serves as cofactor.

It is found in the cytoplasm. The enzyme catalyses uridine(54) in tRNA + (6R)-5,10-methylene-5,6,7,8-tetrahydrofolate + NADH + H(+) = 5-methyluridine(54) in tRNA + (6S)-5,6,7,8-tetrahydrofolate + NAD(+). It catalyses the reaction uridine(54) in tRNA + (6R)-5,10-methylene-5,6,7,8-tetrahydrofolate + NADPH + H(+) = 5-methyluridine(54) in tRNA + (6S)-5,6,7,8-tetrahydrofolate + NADP(+). In terms of biological role, catalyzes the folate-dependent formation of 5-methyl-uridine at position 54 (M-5-U54) in all tRNAs. This chain is Methylenetetrahydrofolate--tRNA-(uracil-5-)-methyltransferase TrmFO, found in Sphingopyxis alaskensis (strain DSM 13593 / LMG 18877 / RB2256) (Sphingomonas alaskensis).